We begin with the raw amino-acid sequence, 504 residues long: PE-PGRS family protein PE_PGRS62 (504 aa).

The PE domain occupies 4-94 (VVTVPEAVAA…AAYLNTESAN (91 aa)).

The protein belongs to the mycobacterial PE family. PGRS subfamily. As to quaternary structure, interacts with host Toll-like receptor 2 (TLR2).

The protein localises to the secreted. It is found in the cell wall. Supports mycobacterial virulence via inhibition of phagosome maturation and host inducible nitric oxide synthase (iNOS) expression. May promote the survival within macrophages by disturbing the cytokines profiles and blocking the endoplasmic reticulum (ER) stress-mediated apoptosis. May also affect bacterial cell wall composition. In terms of biological role, expression in Mycobacterium smegmatis, a nonpathogenic species naturally deficient in PE_PGRS genes, results in enhanced resistance to various in vitro stresses. It also leads to phagosome maturation arrest and increased survival in macrophages. In Mycobacterium tuberculosis (strain ATCC 25618 / H37Rv), this protein is PE-PGRS family protein PE_PGRS62.